The following is a 208-amino-acid chain: Small ribosomal subunit protein uS4 (208 aa).

The 62-residue stretch at 98–159 (LRLDNVVFRL…RSKKVVRITE (62 aa)) folds into the S4 RNA-binding domain.

Belongs to the universal ribosomal protein uS4 family. In terms of assembly, part of the 30S ribosomal subunit. Contacts protein S5. The interaction surface between S4 and S5 is involved in control of translational fidelity.

Functionally, one of the primary rRNA binding proteins, it binds directly to 16S rRNA where it nucleates assembly of the body of the 30S subunit. With S5 and S12 plays an important role in translational accuracy. This is Small ribosomal subunit protein uS4 from Anaeromyxobacter dehalogenans (strain 2CP-1 / ATCC BAA-258).